The following is a 336-amino-acid chain: Ornithine carbamoyltransferase, catabolic (336 aa).

Carbamoyl phosphate contacts are provided by residues 62–65 (STRT), Q89, R113, and 140–143 (HPTQ). L-ornithine contacts are provided by residues N172, D236, and 240 to 241 (SM). Residues 277–278 (CL) and R322 contribute to the carbamoyl phosphate site.

It belongs to the aspartate/ornithine carbamoyltransferase superfamily. OTCase family.

It is found in the cytoplasm. The enzyme catalyses carbamoyl phosphate + L-ornithine = L-citrulline + phosphate + H(+). It functions in the pathway amino-acid degradation; L-arginine degradation via ADI pathway; carbamoyl phosphate from L-arginine: step 2/2. Its function is as follows. Reversibly catalyzes the transfer of the carbamoyl group from carbamoyl phosphate (CP) to the N(epsilon) atom of ornithine (ORN) to produce L-citrulline. This chain is Ornithine carbamoyltransferase, catabolic (arcB), found in Staphylococcus aureus (strain N315).